The sequence spans 101 residues: NAD(P)H-quinone oxidoreductase subunit 4L, chloroplastic (101 aa).

3 consecutive transmembrane segments (helical) span residues 2–22 (MLEH…YGLI), 32–52 (MCLE…SDFF), and 61–81 (IFSI…LAIV).

Belongs to the complex I subunit 4L family. In terms of assembly, NDH is composed of at least 16 different subunits, 5 of which are encoded in the nucleus.

It is found in the plastid. Its subcellular location is the chloroplast thylakoid membrane. The catalysed reaction is a plastoquinone + NADH + (n+1) H(+)(in) = a plastoquinol + NAD(+) + n H(+)(out). The enzyme catalyses a plastoquinone + NADPH + (n+1) H(+)(in) = a plastoquinol + NADP(+) + n H(+)(out). NDH shuttles electrons from NAD(P)H:plastoquinone, via FMN and iron-sulfur (Fe-S) centers, to quinones in the photosynthetic chain and possibly in a chloroplast respiratory chain. The immediate electron acceptor for the enzyme in this species is believed to be plastoquinone. Couples the redox reaction to proton translocation, and thus conserves the redox energy in a proton gradient. The polypeptide is NAD(P)H-quinone oxidoreductase subunit 4L, chloroplastic (Helianthus annuus (Common sunflower)).